We begin with the raw amino-acid sequence, 413 residues long: RNA-binding protein 41 (413 aa).

The segment covering Ser223–Leu235 has biased composition (polar residues). Residues Ser223 to Lys247 form a disordered region. Ser232 carries the post-translational modification Phosphoserine. The RRM domain maps to Lys309–Asn387.

May bind RNA. The chain is RNA-binding protein 41 (RBM41) from Homo sapiens (Human).